A 491-amino-acid chain; its full sequence is AP-2 complex subunit mu (491 aa).

Residues Ser179, Ser180, and Ser181 each carry the phosphoserine modification. One can recognise an MHD domain in the interval Lys209–Arg490.

Belongs to the adaptor complexes medium subunit family. In terms of assembly, adaptor protein complex 2 (AP-2) is a heterotetramer composed of two large adaptins (alpha-type subunit APL3 and beta-type subunit APL1), a medium chain (mu-type subunit APM4) and a small adaptin (sigma-type subunit APS2).

The protein resides in the membrane. It is found in the clathrin-coated pit. It localises to the cytoplasmic vesicle. Its subcellular location is the clathrin-coated vesicle membrane. Functionally, component of the adaptor complexes which link clathrin to receptors in coated vesicles. Clathrin-associated protein complexes are believed to interact with the cytoplasmic tails of membrane proteins, leading to their selection and concentration. The protein is AP-2 complex subunit mu (APM4) of Saccharomyces cerevisiae (strain ATCC 204508 / S288c) (Baker's yeast).